A 322-amino-acid chain; its full sequence is Digestive cysteine proteinase 1 (322 aa).

A signal peptide spans 1–16 (MKVVALFLFGLALAAA). Residues 17–105 (NPSWEEFKGK…VFTSTDAAPE (89 aa)) constitute a propeptide, activation peptide. Intrachain disulfides connect Cys126–Cys170, Cys160–Cys203, and Cys262–Cys311. Cys129 is an active-site residue. Residues His269 and Asn289 contribute to the active site.

Belongs to the peptidase C1 family.

With respect to regulation, inhibited by E-64, antipain, leupeptin, heavy metal ions, iodoacetic acid, dithionitrobenzene, p-hydroxymercuri-benzoate; activated by mercaptoethanol and dithiothreitol. This Homarus americanus (American lobster) protein is Digestive cysteine proteinase 1 (LCP1).